A 275-amino-acid chain; its full sequence is Large ribosomal subunit protein uL2 (275 aa).

Positions 212 to 259 (RWKGIRPTNRGVTMNPVDHPHGGGEGKTSGGRHPVTPWGQPTRGYKTR) are disordered.

It belongs to the universal ribosomal protein uL2 family. In terms of assembly, part of the 50S ribosomal subunit. Forms a bridge to the 30S subunit in the 70S ribosome.

One of the primary rRNA binding proteins. Required for association of the 30S and 50S subunits to form the 70S ribosome, for tRNA binding and peptide bond formation. It has been suggested to have peptidyltransferase activity; this is somewhat controversial. Makes several contacts with the 16S rRNA in the 70S ribosome. This Acidobacterium capsulatum (strain ATCC 51196 / DSM 11244 / BCRC 80197 / JCM 7670 / NBRC 15755 / NCIMB 13165 / 161) protein is Large ribosomal subunit protein uL2.